A 227-amino-acid polypeptide reads, in one-letter code: tRNA (guanine-N(1)-)-methyltransferase (227 aa).

S-adenosyl-L-methionine-binding positions include Gly112 and 132–137; that span reads LGDFVL.

It belongs to the RNA methyltransferase TrmD family. As to quaternary structure, homodimer.

It is found in the cytoplasm. It carries out the reaction guanosine(37) in tRNA + S-adenosyl-L-methionine = N(1)-methylguanosine(37) in tRNA + S-adenosyl-L-homocysteine + H(+). In terms of biological role, specifically methylates guanosine-37 in various tRNAs. This Gloeobacter violaceus (strain ATCC 29082 / PCC 7421) protein is tRNA (guanine-N(1)-)-methyltransferase.